Consider the following 273-residue polypeptide: Small ribosomal subunit protein uS3 (273 aa).

The KH type-2 domain occupies 40 to 110 (IRNLFFVNYR…NLDLTINEIG (71 aa)). Residues 244-265 (QVLSANKLTGSDVETSSIQALT) are compositionally biased toward polar residues. Positions 244-273 (QVLSANKLTGSDVETSSIQALTKPNKEDKQ) are disordered.

It belongs to the universal ribosomal protein uS3 family. Part of the 30S ribosomal subunit. Forms a tight complex with proteins S10 and S14.

In terms of biological role, binds the lower part of the 30S subunit head. Binds mRNA in the 70S ribosome, positioning it for translation. This Mycoplasma pneumoniae (strain ATCC 29342 / M129 / Subtype 1) (Mycoplasmoides pneumoniae) protein is Small ribosomal subunit protein uS3.